Consider the following 403-residue polypeptide: Phosphoglycerate kinase (403 aa).

Substrate-binding positions include 21–23 (DFN), Arg-36, 59–62 (HLGR), Arg-119, and Arg-159. ATP is bound by residues Lys-214, Gly-301, Glu-332, and 359-362 (GGDS).

It belongs to the phosphoglycerate kinase family. In terms of assembly, monomer.

The protein resides in the cytoplasm. It carries out the reaction (2R)-3-phosphoglycerate + ATP = (2R)-3-phospho-glyceroyl phosphate + ADP. It participates in carbohydrate degradation; glycolysis; pyruvate from D-glyceraldehyde 3-phosphate: step 2/5. This is Phosphoglycerate kinase from Lactobacillus gasseri (strain ATCC 33323 / DSM 20243 / BCRC 14619 / CIP 102991 / JCM 1131 / KCTC 3163 / NCIMB 11718 / NCTC 13722 / AM63).